The chain runs to 149 residues: Large ribosomal subunit protein bL9 (149 aa).

This sequence belongs to the bacterial ribosomal protein bL9 family.

Functionally, binds to the 23S rRNA. This Buchnera aphidicola subsp. Cinara cedri (strain Cc) protein is Large ribosomal subunit protein bL9.